The chain runs to 566 residues: Alpha-N-acetylgalactosaminide alpha-2,6-sialyltransferase 1 (566 aa).

Residues 1 to 16 (MGFLIRRLPKDSRIFR) are Cytoplasmic-facing. A helical; Signal-anchor for type II membrane protein membrane pass occupies residues 17–37 (WLLILTVFSFIITSFSALFGM). Residues 38 to 566 (EKSIFRQLKI…ENIMKLYQRS (529 aa)) lie on the Lumenal side of the membrane. N-linked (GlcNAc...) asparagine glycans are attached at residues asparagine 66 and asparagine 132. Residues 138-161 (ASVVERTKEKTTARPVPGVGEADG) are disordered. Asparagine 192 carries N-linked (GlcNAc...) asparagine glycosylation. Repeat 1 spans residues 247–254 (SSSPVSTC). Residues 247–337 (SSSPVSTCSE…ANSSSNVSTC (91 aa)) form a 2 X 8 AA repeats of S-S-S-X-V-S-T-C region. 2 disulfide bridges follow: cysteine 254-cysteine 337 and cysteine 340-cysteine 508. N-linked (GlcNAc...) asparagine glycans are attached at residues asparagine 275, asparagine 286, asparagine 306, asparagine 329, and asparagine 333. Repeat 2 spans residues 330–337 (SSSNVSTC).

This sequence belongs to the glycosyltransferase 29 family. Heart, kidney, testes, brain, liver and lung.

The protein resides in the golgi apparatus membrane. The catalysed reaction is a beta-D-galactosyl-(1-&gt;3)-N-acetyl-alpha-D-galactosaminyl derivative + CMP-N-acetyl-beta-neuraminate = a beta-D-galactosyl-(1-&gt;3)-[N-acetyl-alpha-neuraminyl-(2-&gt;6)]-N-acetyl-alpha-D-galactosaminyl derivative + CMP + H(+). The enzyme catalyses a 3-O-[N-acetyl-alpha-D-galactosaminyl]-L-seryl-[protein] + CMP-N-acetyl-beta-neuraminate = a 3-O-[N-acetyl-alpha-neuraminosyl-(2-&gt;6)-N-acetyl-alpha-D-galactosaminyl]-L-seryl-[protein] + CMP + H(+). It carries out the reaction a 3-O-[N-acetyl-alpha-D-galactosaminyl]-L-threonyl-[protein] + CMP-N-acetyl-beta-neuraminate = a 3-O-[N-acetyl-alpha-neuraminosyl-(2-&gt;6)-N-acetyl-alpha-D-galactosaminyl]-L-threonyl-[protein] + CMP + H(+). It catalyses the reaction a 3-O-[beta-D-galactosyl-(1-&gt;3)-N-acetyl-alpha-D-galactosaminyl]-L-seryl-[protein] + CMP-N-acetyl-beta-neuraminate = a 3-O-{beta-D-galactosyl-(1-&gt;3)-[N-acetyl-alpha-neuraminosyl-(2-&gt;6)]-N-acetyl-alpha-D-galactosaminyl}-L-seryl-[protein] + CMP + H(+). The catalysed reaction is a 3-O-[beta-D-galactosyl-(1-&gt;3)-N-acetyl-alpha-D-galactosaminyl]-L-threonyl-[protein] + CMP-N-acetyl-beta-neuraminate = a 3-O-{beta-D-galactosyl-(1-&gt;3)-[N-acetyl-alpha-neuraminosyl-(2-&gt;6)]-N-acetyl-alpha-D-galactosaminyl}-L-threonyl-[protein] + CMP + H(+). The enzyme catalyses a 3-O-[N-acetyl-alpha-neuraminyl-(2-&gt;3)-beta-D-galactosyl-(1-&gt;3)-N-acetyl-alpha-D-galactosaminyl]-L-threonyl-[protein] + CMP-N-acetyl-beta-neuraminate = a 3-O-{alpha-Neu5Ac-(2-&gt;3)-beta-D-Gal-(1-&gt;3)-[alpha-Neu5Ac-(2-&gt;6)]-alpha-D-GalNAc}-L-threonyl-[protein] + CMP + H(+). It participates in protein modification; protein glycosylation. Functionally, protein sialyltransferase specifically expressed in goblet cells that plays a key role in intestinal host-commensal homeostasis. Conjugates sialic acid with an alpha-2-6 linkage to N-acetylgalactosamine (GalNAc) glycan chains linked to serine or threonine in glycoproteins. Generates sialylated T and Tn antigens.. This chain is Alpha-N-acetylgalactosaminide alpha-2,6-sialyltransferase 1 (ST6GALNAC1), found in Gallus gallus (Chicken).